A 432-amino-acid polypeptide reads, in one-letter code: D-amino acid dehydrogenase (432 aa).

FAD is bound at residue 3 to 17 (VVILGSGVVGVTSAW).

Belongs to the DadA oxidoreductase family. FAD serves as cofactor.

The enzyme catalyses a D-alpha-amino acid + A + H2O = a 2-oxocarboxylate + AH2 + NH4(+). It participates in amino-acid degradation; D-alanine degradation; NH(3) and pyruvate from D-alanine: step 1/1. Oxidative deamination of D-amino acids. This Salmonella agona (strain SL483) protein is D-amino acid dehydrogenase.